We begin with the raw amino-acid sequence, 440 residues long: Protein disulfide-isomerase 5-2 (440 aa).

The signal sequence occupies residues 1–23 (MRSLKLLLCWISFLTLSISISAS). The region spanning 24–139 (SDDQFTLDGT…LVRYLKKFVA (116 aa)) is the Thioredoxin domain. Residues Cys61 and Cys64 each act as nucleophile in the active site. The cysteines at positions 61 and 64 are disulfide-linked. Thr160 is subject to Phosphothreonine. N-linked (GlcNAc...) asparagine glycosylation is present at Asn171. Residues 376 to 396 (SMIGIRSVYILVFLVAVIMML) form a helical membrane-spanning segment. The tract at residues 406-440 (TGVRTATAVRERVDQATTVPEDESSEHKPSDKKED) is disordered. The span at 430–440 (SEHKPSDKKED) shows a compositional bias: basic and acidic residues.

It belongs to the protein disulfide isomerase family. Widely expressed.

It is found in the membrane. Acts as a protein-folding catalyst that interacts with nascent polypeptides to catalyze the formation, isomerization, and reduction or oxidation of disulfide bonds. The protein is Protein disulfide-isomerase 5-2 (PDIL5-2) of Arabidopsis thaliana (Mouse-ear cress).